The chain runs to 201 residues: FMN-dependent NADH:quinone oxidoreductase (201 aa).

Residues Ser10, 16-18 (SQS), 96-99 (MYNF), and 140-143 (SRGG) contribute to the FMN site.

It belongs to the azoreductase type 1 family. In terms of assembly, homodimer. FMN is required as a cofactor.

It carries out the reaction 2 a quinone + NADH + H(+) = 2 a 1,4-benzosemiquinone + NAD(+). It catalyses the reaction N,N-dimethyl-1,4-phenylenediamine + anthranilate + 2 NAD(+) = 2-(4-dimethylaminophenyl)diazenylbenzoate + 2 NADH + 2 H(+). Functionally, quinone reductase that provides resistance to thiol-specific stress caused by electrophilic quinones. In terms of biological role, also exhibits azoreductase activity. Catalyzes the reductive cleavage of the azo bond in aromatic azo compounds to the corresponding amines. In Escherichia coli O157:H7, this protein is FMN-dependent NADH:quinone oxidoreductase.